We begin with the raw amino-acid sequence, 1622 residues long: ABC transporter C family member 1 (1622 aa).

Transmembrane regions (helical) follow at residues 37-57, 73-93, 110-130, 145-165, 174-194, 336-356, 440-460, 527-547, and 557-577; these read FVLGISHLVLLILCLYRLWLI, FSYFLALLAAYATAEPLFRLV, EAFMLVLEAFAWGSALVMTVV, FAVIYALVGDMVLLNLVLSVK, YLYISEVAVQVAFGTLLFVYF, AWIGYIYAISIFVGVVLGVLC, VASIIGALFLVLMFPIQTVII, FILNSIPVLVTVVSFGVFSLL, and FTSLSLFSVLRFPLFMLPNII. Residues 302 to 582 enclose the ABC transmembrane type-1 1 domain; sequence FWWGGFWKIG…LPNIITQMVN (281 aa). The region spanning 614 to 838 is the ABC transporter 1 domain; the sequence is ISIRNGYFSW…GPLFQRLMEN (225 aa). 649–656 contributes to the ATP binding site; the sequence is GSTGEGKT. Residues 852 to 876 form a disordered region; the sequence is AEVDQTSVKPVENGNANNLQKDGIE. Residues 855–871 show a composition bias toward polar residues; that stretch reads DQTSVKPVENGNANNLQ. A run of 6 helical transmembrane segments spans residues 909 to 929, 951 to 971, 1027 to 1049, 1053 to 1072, 1138 to 1158, and 1172 to 1192; these read ALGGAWVVMMLVICYVLTQVF, PLFYNIVYALLSFGQVSVTLI, AVFVNMFMGSIAQLLSTVILIGI, LSLWAIMPLLVVFYGAYLYY, LGIRLEVLGGLMVWLTASLAV, and STMGLLLSYALSITSSLTAVL. Residues 916 to 1200 enclose the ABC transmembrane type-1 2 domain; the sequence is VMMLVICYVL…VLRLASLAEN (285 aa). Residues 1231 to 1246 form an interaction with calmodulin and FKP42/TWD1 region; the sequence is WPSSGSIKFEDVVLRY. Residues 1237–1471 enclose the ABC transporter 2 domain; the sequence is IKFEDVVLRY…GESSFSKMVQ (235 aa). Residue 1271 to 1278 participates in ATP binding; it reads GRTGAGKS.

Belongs to the ABC transporter superfamily. ABCC family. Conjugate transporter (TC 3.A.1.208) subfamily. Interacts with calmodulin (CaM), PAS1 and FKBP42/TWD1. Ubiquitous, with higher levels in leaves and stems and lower levels in roots. Localized in the root apex, root hair tips and root epidermis.

Its subcellular location is the vacuole membrane. It carries out the reaction ATP + H2O + xenobioticSide 1 = ADP + phosphate + xenobioticSide 2.. In terms of biological role, pump for glutathione S-conjugates. Mediates the transport of S-(2,4-dinitrophenyl)-glutathione (DNP-GS), GSSG, cyanidin 3-glucoside-GS (C3G-GS) and metolachlor-GS (MOC-GS). The protein is ABC transporter C family member 1 (ABCC1) of Arabidopsis thaliana (Mouse-ear cress).